Consider the following 347-residue polypeptide: Photosystem II assembly protein Ycf48 (347 aa).

An N-terminal signal peptide occupies residues Met-1 to Ala-38. The Arg-rich patch motif lies at Arg-202–Arg-226.

The protein belongs to the Ycf48 family. Interacts with the D1 protein (crystallized with PsbA1 or PsbA3), via the latter's C-terminal prepropeptide, may interact with parts of the mature D1 protein as well.

It localises to the cellular thylakoid lumen. A factor required for optimal assembly of photosystem II (PSII), acting in the early stages of PSII assembly. Also plays a role in replacement of photodamaged D1 (psbA). Assists YidC in synthesis of chlorophyll-binding proteins. In Thermosynechococcus vestitus (strain NIES-2133 / IAM M-273 / BP-1), this protein is Photosystem II assembly protein Ycf48.